The sequence spans 387 residues: Chaperone protein DnaJ (387 aa).

Positions 5 to 70 constitute a J domain; sequence DYYEILEVSA…QKRQAYDQFG (66 aa). A CR-type zinc finger spans residues 130 to 208; the sequence is GTTVDVRIPT…CRGEGYKHSS (79 aa). 8 residues coordinate Zn(2+): cysteine 143, cysteine 146, cysteine 160, cysteine 163, cysteine 182, cysteine 185, cysteine 196, and cysteine 199. CXXCXGXG motif repeat units follow at residues 143–150, 160–167, 182–189, and 196–203; these read CESCDGSG, CPTCQGIG, CPNCHGTG, and CKTCRGEG.

It belongs to the DnaJ family. Homodimer. The cofactor is Zn(2+).

The protein localises to the cytoplasm. Participates actively in the response to hyperosmotic and heat shock by preventing the aggregation of stress-denatured proteins and by disaggregating proteins, also in an autonomous, DnaK-independent fashion. Unfolded proteins bind initially to DnaJ; upon interaction with the DnaJ-bound protein, DnaK hydrolyzes its bound ATP, resulting in the formation of a stable complex. GrpE releases ADP from DnaK; ATP binding to DnaK triggers the release of the substrate protein, thus completing the reaction cycle. Several rounds of ATP-dependent interactions between DnaJ, DnaK and GrpE are required for fully efficient folding. Also involved, together with DnaK and GrpE, in the DNA replication of plasmids through activation of initiation proteins. The sequence is that of Chaperone protein DnaJ from Hydrogenovibrio crunogenus (strain DSM 25203 / XCL-2) (Thiomicrospira crunogena).